A 261-amino-acid chain; its full sequence is Carnitinyl-CoA dehydratase (261 aa).

Glutamate 111 serves as the catalytic Nucleophile. Glutamate 131 acts as the Proton acceptor in catalysis.

It belongs to the enoyl-CoA hydratase/isomerase family.

It catalyses the reaction (R)-carnitinyl-CoA = crotonobetainyl-CoA + H2O. The protein operates within amine and polyamine metabolism; carnitine metabolism. Functionally, catalyzes the reversible dehydration of L-carnitinyl-CoA to crotonobetainyl-CoA. The chain is Carnitinyl-CoA dehydratase from Escherichia coli (strain SMS-3-5 / SECEC).